Reading from the N-terminus, the 684-residue chain is Coiled-coil domain-containing protein 62 (684 aa).

Coiled coils occupy residues 11–160 and 199–322; these read RQNI…QALT and TCIV…ESKA. Residues 579–603 form a disordered region; that stretch reads SLGSSKSALREDETESSSNKKNSPT. Residues 594–603 are compositionally biased toward polar residues; sequence SSSNKKNSPT. 2 consecutive short sequence motifs (LXXLL motif) follow at residues 634 to 638 and 650 to 654; these read LQRLL and LSTLL. The interval 657–684 is disordered; it reads SHENLTGSATNKSEVPEESAQKNTFVSY. Residues 659-669 show a composition bias toward polar residues; that stretch reads ENLTGSATNKS.

Interacts with ESR1 and ESR2 in the presence of estradiol/E2. The interaction with ESR2 recruits CCDC62 to ER target genes, including cyclin-D1/CCND1 AP-1 promoter. Interacts with GOPC. In terms of tissue distribution, highly expressed in adult testis. Expressed in both prostate epithelial and stromal cells, with predominant expression in epithelial cells (at protein level). Not detected in prostate by RT-PCR. Overexpressed in various cancers.

It is found in the cytoplasm. The protein resides in the nucleus. Its subcellular location is the cytoplasmic vesicle. The protein localises to the secretory vesicle. It localises to the acrosome. Functionally, nuclear receptor coactivator that can enhance preferentially estrogen receptors ESR1 and ESR2 transactivation. Also modulates progesterone/PGR, glucocorticoid/NR3C1 and androgen/AR receptors transactivation, although at lower level; little effect on vitamin D receptor/VDR. Required for normal spermiogenesis. It probably plays a role in acrosome formation. The chain is Coiled-coil domain-containing protein 62 (CCDC62) from Homo sapiens (Human).